Reading from the N-terminus, the 175-residue chain is Peptide deformylase (175 aa).

2 residues coordinate Fe cation: Cys-96 and His-138. The active site involves Glu-139. His-142 serves as a coordination point for Fe cation.

It belongs to the polypeptide deformylase family. Requires Fe(2+) as cofactor.

It carries out the reaction N-terminal N-formyl-L-methionyl-[peptide] + H2O = N-terminal L-methionyl-[peptide] + formate. In terms of biological role, removes the formyl group from the N-terminal Met of newly synthesized proteins. Requires at least a dipeptide for an efficient rate of reaction. N-terminal L-methionine is a prerequisite for activity but the enzyme has broad specificity at other positions. The protein is Peptide deformylase of Campylobacter jejuni subsp. jejuni serotype O:2 (strain ATCC 700819 / NCTC 11168).